A 163-amino-acid chain; its full sequence is SsrA-binding protein (163 aa).

This sequence belongs to the SmpB family.

The protein resides in the cytoplasm. Its function is as follows. Required for rescue of stalled ribosomes mediated by trans-translation. Binds to transfer-messenger RNA (tmRNA), required for stable association of tmRNA with ribosomes. tmRNA and SmpB together mimic tRNA shape, replacing the anticodon stem-loop with SmpB. tmRNA is encoded by the ssrA gene; the 2 termini fold to resemble tRNA(Ala) and it encodes a 'tag peptide', a short internal open reading frame. During trans-translation Ala-aminoacylated tmRNA acts like a tRNA, entering the A-site of stalled ribosomes, displacing the stalled mRNA. The ribosome then switches to translate the ORF on the tmRNA; the nascent peptide is terminated with the 'tag peptide' encoded by the tmRNA and targeted for degradation. The ribosome is freed to recommence translation, which seems to be the essential function of trans-translation. In Shewanella putrefaciens (strain CN-32 / ATCC BAA-453), this protein is SsrA-binding protein.